The sequence spans 515 residues: 1-pyrroline-5-carboxylate dehydrogenase (515 aa).

Catalysis depends on residues Glu-286 and Cys-320.

This sequence belongs to the aldehyde dehydrogenase family. RocA subfamily.

The enzyme catalyses L-glutamate 5-semialdehyde + NAD(+) + H2O = L-glutamate + NADH + 2 H(+). It functions in the pathway amino-acid degradation; L-proline degradation into L-glutamate; L-glutamate from L-proline: step 2/2. The polypeptide is 1-pyrroline-5-carboxylate dehydrogenase (rocA) (Bacillus subtilis (strain 168)).